The primary structure comprises 65 residues: uncharacterized protein (65 aa).

The tract at residues 1 to 30 (MPAASLESLLPPPPGKLPSPPLRPHGKFQR) is disordered. Positions 10-23 (LPPPPGKLPSPPLR) are enriched in pro residues.

This is an uncharacterized protein from Homo sapiens (Human).